We begin with the raw amino-acid sequence, 459 residues long: Alcohol acyl transferase 1 allele RGc (459 aa).

Residues His164 and Asn385 each act as proton acceptor in the active site.

The protein belongs to the plant acyltransferase family. In terms of tissue distribution, expressed at very low levels in the skin of ripe fruit.

Its function is as follows. Involved in the biosynthesis of volatile esters which confer ripe apple fruit flavor. Alcohol acyl transferase that can use a wide range of alcohols as substrate to produce esters. The chain is Alcohol acyl transferase 1 allele RGc from Malus domestica (Apple).